A 361-amino-acid chain; its full sequence is S-adenosylmethionine:tRNA ribosyltransferase-isomerase (361 aa).

This sequence belongs to the QueA family. As to quaternary structure, monomer.

Its subcellular location is the cytoplasm. It carries out the reaction 7-aminomethyl-7-carbaguanosine(34) in tRNA + S-adenosyl-L-methionine = epoxyqueuosine(34) in tRNA + adenine + L-methionine + 2 H(+). The protein operates within tRNA modification; tRNA-queuosine biosynthesis. Its function is as follows. Transfers and isomerizes the ribose moiety from AdoMet to the 7-aminomethyl group of 7-deazaguanine (preQ1-tRNA) to give epoxyqueuosine (oQ-tRNA). The chain is S-adenosylmethionine:tRNA ribosyltransferase-isomerase from Afipia carboxidovorans (strain ATCC 49405 / DSM 1227 / KCTC 32145 / OM5) (Oligotropha carboxidovorans).